Reading from the N-terminus, the 21-residue chain is MKYINCVYNINYKLKPHSHYK.

This is an uncharacterized protein from Escherichia coli (strain K12).